Here is a 549-residue protein sequence, read N- to C-terminus: Beta-hexosaminidase Amuc_0868 (549 aa).

The N-terminal stretch at 1-28 is a signal peptide; sequence MISKCTFSATVFSLFSLCWGAPSSPVLE. Arg-161 is a substrate binding site. Residues Asp-190 and His-260 each act as charge relay system in the active site. Asp-326 provides a ligand contact to substrate. Glu-327 acts as the Charge relay system in catalysis. Residues Trp-393, 420-422, and 474-476 contribute to the substrate site; these read YFD and WTE. Positions 526-549 are disordered; it reads GVNYKRPDNGAPAQPKAVITRERR.

Belongs to the glycosyl hydrolase 20 family.

It carries out the reaction Hydrolysis of terminal non-reducing N-acetyl-D-hexosamine residues in N-acetyl-beta-D-hexosaminides.. Inhibited strongly by Cu(2+), Zn(2+), Cd(2+) and Ni(2+) ions. No effect on activity with Na(+), Li(+), K(+), Ca(2+), Mg(2+) or Mn(2+) ions. Potentially capable of cleaving the specific glycoside linkages in the process of mucin degradation in human intestinal tract. Hydrolyzes chromogenic substrates pNP-beta-GlcNAc with high activity and pNP-beta-GalNAc to a lesser extent, but not pNP-beta-glucose or pNP-beta-galactose. The polypeptide is Beta-hexosaminidase Amuc_0868 (Akkermansia muciniphila (strain ATCC BAA-835 / DSM 22959 / JCM 33894 / BCRC 81048 / CCUG 64013 / CIP 107961 / Muc)).